A 265-amino-acid polypeptide reads, in one-letter code: Zinc import ATP-binding protein ZnuC (265 aa).

The ABC transporter domain occupies 6-221 (IRLEQVAVTL…PAFVELFGKN (216 aa)). 38-45 (GPNGAGKT) contributes to the ATP binding site. Residues 245-265 (DAPATSSHTHTHVHGDHCKHG) are disordered.

It belongs to the ABC transporter superfamily. Zinc importer (TC 3.A.1.15.5) family. As to quaternary structure, the complex is composed of two ATP-binding proteins (ZnuC), two transmembrane proteins (ZnuB) and a solute-binding protein (ZnuA).

It localises to the cell inner membrane. It catalyses the reaction Zn(2+)(out) + ATP(in) + H2O(in) = Zn(2+)(in) + ADP(in) + phosphate(in) + H(+)(in). In terms of biological role, part of the ABC transporter complex ZnuABC involved in zinc import. Responsible for energy coupling to the transport system. The chain is Zinc import ATP-binding protein ZnuC from Pseudomonas savastanoi pv. phaseolicola (strain 1448A / Race 6) (Pseudomonas syringae pv. phaseolicola (strain 1448A / Race 6)).